A 284-amino-acid polypeptide reads, in one-letter code: MEMO1 family protein M1425_2054 (284 aa).

This sequence belongs to the MEMO1 family.

In Saccharolobus islandicus (strain M.14.25 / Kamchatka #1) (Sulfolobus islandicus), this protein is MEMO1 family protein M1425_2054.